The chain runs to 146 residues: Large-conductance mechanosensitive channel (146 aa).

3 helical membrane passes run 21-41, 44-64, and 83-103; these read VGII…ADLI, IIGL…LGDG, and GSFI…FLLV.

The protein belongs to the MscL family. Homopentamer.

It is found in the cell inner membrane. Functionally, channel that opens in response to stretch forces in the membrane lipid bilayer. May participate in the regulation of osmotic pressure changes within the cell. In Cereibacter sphaeroides (strain ATCC 17023 / DSM 158 / JCM 6121 / CCUG 31486 / LMG 2827 / NBRC 12203 / NCIMB 8253 / ATH 2.4.1.) (Rhodobacter sphaeroides), this protein is Large-conductance mechanosensitive channel.